A 156-amino-acid chain; its full sequence is Small ribosomal subunit protein uS7 (156 aa).

It belongs to the universal ribosomal protein uS7 family. As to quaternary structure, part of the 30S ribosomal subunit. Contacts proteins S9 and S11.

In terms of biological role, one of the primary rRNA binding proteins, it binds directly to 16S rRNA where it nucleates assembly of the head domain of the 30S subunit. Is located at the subunit interface close to the decoding center, probably blocks exit of the E-site tRNA. The polypeptide is Small ribosomal subunit protein uS7 (Nitratidesulfovibrio vulgaris (strain ATCC 29579 / DSM 644 / CCUG 34227 / NCIMB 8303 / VKM B-1760 / Hildenborough) (Desulfovibrio vulgaris)).